The sequence spans 673 residues: Estrogen receptor beta (673 aa).

Positions 1-181 (MASSPGLDPH…SAVGKADMHF (181 aa)) are modulating. 2 consecutive NR C4-type zinc fingers follow at residues 182–202 (CAVC…CEGC) and 218–242 (CPAT…LRKC). The segment at residues 182 to 247 (CAVCHDYASG…RLRKCYEVGM (66 aa)) is a DNA-binding region (nuclear receptor). Residues 316 to 552 (SPEEFISRIM…DLLLEMLDAN (237 aa)) enclose the NR LBD domain. Residues 553 to 602 (TSSGGSQPSSSPSSETYSDQHQYPQPPSHLHPGSEQTTADHAIVPPLGPT) are disordered. The segment covering 554–566 (SSGGSQPSSSPSS) has biased composition (low complexity).

It belongs to the nuclear hormone receptor family. NR3 subfamily. In terms of assembly, binds DNA as a homodimer. Can form a heterodimer with ER-alpha. Abundant in the liver and testes, less abundant in the ovary and barely detectable in the muscle.

It is found in the nucleus. In terms of biological role, binds estrogens with an affinity similar to that of ER-alpha, and activates expression of reporter genes containing estrogen response elements (ERE) in an estrogen-dependent manner. The sequence is that of Estrogen receptor beta (esr2) from Micropogonias undulatus (Atlantic croaker).